The primary structure comprises 187 residues: Elongation factor P (187 aa).

It belongs to the elongation factor P family.

The protein localises to the cytoplasm. The protein operates within protein biosynthesis; polypeptide chain elongation. Functionally, involved in peptide bond synthesis. Stimulates efficient translation and peptide-bond synthesis on native or reconstituted 70S ribosomes in vitro. Probably functions indirectly by altering the affinity of the ribosome for aminoacyl-tRNA, thus increasing their reactivity as acceptors for peptidyl transferase. The chain is Elongation factor P from Helicobacter pylori (strain P12).